Consider the following 266-residue polypeptide: MIVPKISERFEHCRARQRCALIPFLTAGDPDLETTVAALKILDDHGADLIELGMPYSDPLADGPVIQAAATRALQRGTRLEAVLEMTTDLHQQLTAPLILFSYYNPIYHRGVSSFLKAVAQAGIKGLVIPDLPLEEAEPVLAETANLGLELTLLIAPTTSPERMRAIATASQGFIYLVSTTGVTGMRQEMASRVQELLHTLRQITPKPIGVGFGIASPEHARQVRDWGADAAIVGSAFVKRLAEPDQGLAAVAEFCQSLRTALDTP.

Active-site proton acceptor residues include glutamate 51 and aspartate 62.

The protein belongs to the TrpA family. Tetramer of two alpha and two beta chains.

The catalysed reaction is (1S,2R)-1-C-(indol-3-yl)glycerol 3-phosphate + L-serine = D-glyceraldehyde 3-phosphate + L-tryptophan + H2O. The protein operates within amino-acid biosynthesis; L-tryptophan biosynthesis; L-tryptophan from chorismate: step 5/5. In terms of biological role, the alpha subunit is responsible for the aldol cleavage of indoleglycerol phosphate to indole and glyceraldehyde 3-phosphate. The protein is Tryptophan synthase alpha chain of Thermosynechococcus vestitus (strain NIES-2133 / IAM M-273 / BP-1).